The sequence spans 243 residues: 3-deoxy-manno-octulosonate cytidylyltransferase (243 aa).

This sequence belongs to the KdsB family.

It is found in the cytoplasm. The enzyme catalyses 3-deoxy-alpha-D-manno-oct-2-ulosonate + CTP = CMP-3-deoxy-beta-D-manno-octulosonate + diphosphate. The protein operates within nucleotide-sugar biosynthesis; CMP-3-deoxy-D-manno-octulosonate biosynthesis; CMP-3-deoxy-D-manno-octulosonate from 3-deoxy-D-manno-octulosonate and CTP: step 1/1. It participates in bacterial outer membrane biogenesis; lipopolysaccharide biosynthesis. In terms of biological role, activates KDO (a required 8-carbon sugar) for incorporation into bacterial lipopolysaccharide in Gram-negative bacteria. The protein is 3-deoxy-manno-octulosonate cytidylyltransferase of Helicobacter acinonychis (strain Sheeba).